The sequence spans 574 residues: Pentatricopeptide repeat-containing protein At5g25630 (574 aa).

The segment covering M1–T21 has biased composition (basic and acidic residues). The interval M1–T25 is disordered. PPR repeat units follow at residues T44–P78, S79–L113, D114–P148, T149–D183, N187–P221, D222–P258, N259–A293, N294–A328, D329–P363, D364–E394, N398–P432, and N433–P467.

The protein belongs to the PPR family. P subfamily.

The protein is Pentatricopeptide repeat-containing protein At5g25630 of Arabidopsis thaliana (Mouse-ear cress).